The following is a 685-amino-acid chain: DNA ligase (685 aa).

Residues 47-51, 96-97, and E125 each bind NAD(+); these read DSEYD and SL. Catalysis depends on K127, which acts as the N6-AMP-lysine intermediate. Residues R148, E185, K304, and K328 each coordinate NAD(+). Zn(2+) is bound by residues C422, C425, C440, and C446. One can recognise a BRCT domain in the interval 605 to 685; the sequence is ADAQPLKGQT…ALLALFAANR (81 aa).

Belongs to the NAD-dependent DNA ligase family. LigA subfamily. It depends on Mg(2+) as a cofactor. Mn(2+) serves as cofactor.

It carries out the reaction NAD(+) + (deoxyribonucleotide)n-3'-hydroxyl + 5'-phospho-(deoxyribonucleotide)m = (deoxyribonucleotide)n+m + AMP + beta-nicotinamide D-nucleotide.. Its function is as follows. DNA ligase that catalyzes the formation of phosphodiester linkages between 5'-phosphoryl and 3'-hydroxyl groups in double-stranded DNA using NAD as a coenzyme and as the energy source for the reaction. It is essential for DNA replication and repair of damaged DNA. The polypeptide is DNA ligase (Shewanella putrefaciens (strain CN-32 / ATCC BAA-453)).